We begin with the raw amino-acid sequence, 294 residues long: Urease accessory protein UreD 1 (294 aa).

Residues 1–22 (MALSLDGLPEKPAPAEAPSPPV) are disordered. The segment covering 11–21 (KPAPAEAPSPP) has biased composition (pro residues).

This sequence belongs to the UreD family. As to quaternary structure, ureD, UreF and UreG form a complex that acts as a GTP-hydrolysis-dependent molecular chaperone, activating the urease apoprotein by helping to assemble the nickel containing metallocenter of UreC. The UreE protein probably delivers the nickel.

The protein resides in the cytoplasm. Functionally, required for maturation of urease via the functional incorporation of the urease nickel metallocenter. This chain is Urease accessory protein UreD 1, found in Methylorubrum extorquens (strain PA1) (Methylobacterium extorquens).